A 410-amino-acid polypeptide reads, in one-letter code: Aminopeptidase AmpS (410 aa).

Residues E250, E316, E340, H345, H378, and D380 each coordinate a divalent metal cation.

The protein belongs to the peptidase M29 family. It depends on Co(2+) as a cofactor. Zn(2+) is required as a cofactor. Mg(2+) serves as cofactor.

Metal-dependent exopeptidase. The chain is Aminopeptidase AmpS (ampS) from Bacillus subtilis (strain 168).